The chain runs to 242 residues: Tropomyosin-1 (242 aa).

Disordered regions lie at residues Met1–Ala31 and Thr65–Tyr96. A coiled-coil region spans residues Met1 to Met242. Composition is skewed to basic and acidic residues over residues Thr13–Gln23 and Lys70–Tyr96.

It belongs to the tropomyosin family. In terms of assembly, homodimer. In terms of tissue distribution, expressed ubiquitously.

This chain is Tropomyosin-1 (TPM1), found in Podocoryna carnea (Hydrozoan).